We begin with the raw amino-acid sequence, 647 residues long: Acetyl-coenzyme A synthetase (647 aa).

CoA-binding positions include 190-193, threonine 310, and asparagine 334; that span reads RGGK. ATP contacts are provided by residues 386-388, 410-415, aspartate 499, and arginine 514; these read GEP and DTWWQT. Serine 522 contributes to the CoA binding site. Arginine 525 is a binding site for ATP. Mg(2+) is bound by residues valine 536, histidine 538, and valine 541. Arginine 583 is a CoA binding site. Residue lysine 608 is modified to N6-acetyllysine.

Belongs to the ATP-dependent AMP-binding enzyme family. The cofactor is Mg(2+). Post-translationally, acetylated. Deacetylation by the SIR2-homolog deacetylase activates the enzyme.

It carries out the reaction acetate + ATP + CoA = acetyl-CoA + AMP + diphosphate. Functionally, catalyzes the conversion of acetate into acetyl-CoA (AcCoA), an essential intermediate at the junction of anabolic and catabolic pathways. AcsA undergoes a two-step reaction. In the first half reaction, AcsA combines acetate with ATP to form acetyl-adenylate (AcAMP) intermediate. In the second half reaction, it can then transfer the acetyl group from AcAMP to the sulfhydryl group of CoA, forming the product AcCoA. This Xanthomonas axonopodis pv. citri (strain 306) protein is Acetyl-coenzyme A synthetase.